The sequence spans 100 residues: Phosphoribosyl-ATP pyrophosphatase (100 aa).

It belongs to the PRA-PH family.

It is found in the cytoplasm. The enzyme catalyses 1-(5-phospho-beta-D-ribosyl)-ATP + H2O = 1-(5-phospho-beta-D-ribosyl)-5'-AMP + diphosphate + H(+). It participates in amino-acid biosynthesis; L-histidine biosynthesis; L-histidine from 5-phospho-alpha-D-ribose 1-diphosphate: step 2/9. The sequence is that of Phosphoribosyl-ATP pyrophosphatase (hisE) from Methanopyrus kandleri (strain AV19 / DSM 6324 / JCM 9639 / NBRC 100938).